The chain runs to 777 residues: Glucocorticoid receptor (777 aa).

Residues 1 to 14 (MDSKESLTPGKEEN) show a composition bias toward basic and acidic residues. Residues 1 to 21 (MDSKESLTPGKEENPSSVLTQ) are disordered. The interval 1-420 (MDSKESLTPG…TATTGPPPKL (420 aa)) is modulating. Residue Thr-8 is modified to Phosphothreonine. Omega-N-methylarginine is present on Arg-23. Ser-45, Ser-113, Ser-134, and Ser-141 each carry phosphoserine. Residues 130-182 (NRSTSVPENPKSSASSSVSAAPKEKEFPKTHSDVSSEQQNLKGQTGTNGGNVK) form a disordered region. Positions 134–150 (SVPENPKSSASSSVSAA) are enriched in low complexity. The segment covering 151–163 (PKEKEFPKTHSDV) has biased composition (basic and acidic residues). Residues 164-174 (SSEQQNLKGQT) show a composition bias toward polar residues. Residues Ser-203, Ser-211, and Ser-226 each carry the phosphoserine modification. Lys-258 is covalently cross-linked (Glycyl lysine isopeptide (Lys-Gly) (interchain with G-Cter in SUMO2)). Ser-267 bears the Phosphoserine mark. Glycyl lysine isopeptide (Lys-Gly) (interchain with G-Cter in SUMO); alternate cross-links involve residues Lys-277 and Lys-293. Glycyl lysine isopeptide (Lys-Gly) (interchain with G-Cter in SUMO2); alternate cross-links involve residues Lys-277 and Lys-293. Low complexity predominate over residues 394-414 (SSPSMRPDVSSPPSSSSTATT). Residues 394-415 (SSPSMRPDVSSPPSSSSTATTG) form a disordered region. Phosphoserine is present on Ser-404. Lys-419 participates in a covalent cross-link: Glycyl lysine isopeptide (Lys-Gly) (interchain with G-Cter in ubiquitin). NR C4-type zinc fingers lie at residues 421-441 (CLVC…CGSC) and 457-481 (CAGR…YRKC). The segment at residues 421-486 (CLVCSDEASG…RYRKCLQAGM (66 aa)) is a DNA-binding region (nuclear receptor). An N6-acetyllysine mark is found at Lys-480, Lys-492, Lys-494, and Lys-495. Positions 485 to 777 (GMNLEARKTK…NIKKLLFHQK (293 aa)) are interaction with CLOCK. The interval 487 to 523 (NLEARKTKKKIKGIQQATTGVSQETSENPANKTIVPA) is hinge. Positions 524–758 (TLPQLTPTLV…FPEMLAEIIT (235 aa)) constitute an NR LBD domain. The tract at residues 532–697 (LVSLLEVIEP…EIRMTYIKEL (166 aa)) is interaction with CRY1. A Glycyl lysine isopeptide (Lys-Gly) (interchain with G-Cter in SUMO) cross-link involves residue Lys-703.

It belongs to the nuclear hormone receptor family. NR3 subfamily. As to quaternary structure, heteromultimeric cytoplasmic complex with HSP90AA1, HSPA1A/HSPA1B, and FKBP5 or another immunophilin such as PPID, STIP1, or the immunophilin homolog PPP5C. Upon ligand binding FKBP5 dissociates from the complex and FKBP4 takes its place, thereby linking the complex to dynein and mediating transport to the nucleus, where the complex dissociates. Probably forms a complex composed of chaperones HSP90 and HSP70, co-chaperones CDC37, PPP5C, TSC1 and client protein TSC2, CDK4, AKT, RAF1 and NR3C1; this complex does not contain co-chaperones STIP1/HOP and PTGES3/p23. Directly interacts with UNC45A. Binds to DNA as a homodimer, and as heterodimer with NR3C2 or the retinoid X receptor. Binds STAT5A and STAT5B homodimers and heterodimers. Interacts with NRIP1, POU2F1, POU2F2 and TRIM28. Interacts with several coactivator complexes, including the SMARCA4 complex, CREBBP/EP300, TADA2L (Ada complex) and p160 coactivators such as NCOA2 and NCOA6. Interaction with BAG1 inhibits transactivation. Interacts with HEXIM1 and TGFB1I1. Interacts with NCOA1. Interacts with NCOA3, SMARCA4, SMARCC1, SMARCD1, and SMARCE1. Interacts with CLOCK, CRY1 and CRY2 in a ligand-dependent fashion. Interacts with CIART. Interacts with RWDD3. Interacts with UBE2I/UBC9 and this interaction is enhanced in the presence of RWDD3. Interacts with GRIP1. Interacts with NR4A3 (via nuclear receptor DNA-binding domain), represses transcription activity of NR4A3 on the POMC promoter Nur response element (NurRE). Directly interacts with PNRC2 to attract and form a complex with UPF1 and DCP1A; the interaction leads to rapid mRNA degradation. Interacts with GSK3B. Interacts with FNIP1 and FNIP2. Interacts (via C-terminus) with HNRNPU (via C-terminus). Interacts with MCM3AP. Interacts (via domain NR LBD) with HSP90AA1 and HSP90AB1. In the absence of hormonal ligand, interacts with TACC1. Interacts (via NR LBD domain) with ZNF764 (via KRAB domain); the interaction regulates transcription factor activity of NR3C1 by directing its actions toward certain biologic pathways. Acetylation by CLOCK reduces its binding to glucocorticoid response elements and its transcriptional activity. In terms of processing, increased proteasome-mediated degradation in response to glucocorticoids. Post-translationally, phosphorylated in the absence of hormone; becomes hyperphosphorylated in the presence of glucocorticoid. The Ser-203, Ser-226 and Ser-404-phosphorylated forms are mainly cytoplasmic, and the Ser-211-phosphorylated form is nuclear. Phosphorylation at Ser-211 increases transcriptional activity. Phosphorylation at Ser-203, Ser-226 and Ser-404 decreases signaling capacity. Phosphorylation at Ser-404 may protect from glucocorticoid-induced apoptosis. Phosphorylation at Ser-203 and Ser-211 is not required in regulation of chromosome segregation. May be dephosphorylated by PPP5C, attenuates NR3C1 action. Ubiquitinated by UBR5, leading to its degradation: UBR5 specifically recognizes and binds ligand-bound NR3C1 when it is not associated with coactivators (NCOAs). In presence of NCOAs, the UBR5-degron is not accessible, preventing its ubiquitination and degradation. In terms of processing, sumoylation at Lys-277 and Lys-293 negatively regulates its transcriptional activity. Sumoylation at Lys-703 positively regulates its transcriptional activity in the presence of RWDD3. Sumoylation at Lys-277 and Lys-293 is dispensable whereas sumoylation at Lys-703 is critical for the stimulatory effect of RWDD3 on its transcriptional activity. Heat shock increases sumoylation in a RWDD3-dependent manner. In terms of tissue distribution, within the infant and adult hippocampal formation, highest expression observed in the DG granule cell layer with moderate levels in the DG hilus, the CA2-CA4 pyramidal cell layer and the proximal part of the CA1 pyramidal cell layer. Moderate to high expression levels found in the presubiculum and in its' superficial layers. Weak but specific expression detected throughout the entire corticle mantle. In the amygdala, moderate levels were detected in the lateral, central and medial nuclei. Moderate expression levels were present in the PVNh alongside the third ventricle.

Its subcellular location is the cytoplasm. The protein resides in the nucleus. The protein localises to the mitochondrion. It is found in the cytoskeleton. It localises to the spindle. Its subcellular location is the microtubule organizing center. The protein resides in the centrosome. The protein localises to the chromosome. It is found in the nucleoplasm. Functionally, receptor for glucocorticoids (GC). Has a dual mode of action: as a transcription factor that binds to glucocorticoid response elements (GRE), both for nuclear and mitochondrial DNA, and as a modulator of other transcription factors. Affects inflammatory responses, cellular proliferation and differentiation in target tissues. Involved in chromatin remodeling. Plays a role in rapid mRNA degradation by binding to the 5' UTR of target mRNAs and interacting with PNRC2 in a ligand-dependent manner which recruits the RNA helicase UPF1 and the mRNA-decapping enzyme DCP1A, leading to RNA decay. Could act as a coactivator for STAT5-dependent transcription upon growth hormone (GH) stimulation and could reveal an essential role of hepatic GR in the control of body growth. Mediates glucocorticoid-induced apoptosis. Promotes accurate chromosome segregation during mitosis. May act as a tumor suppressor. May play a negative role in adipogenesis through the regulation of lipolytic and antilipogenic gene expression. The chain is Glucocorticoid receptor (NR3C1) from Callithrix jacchus (White-tufted-ear marmoset).